Consider the following 156-residue polypeptide: Ribosomal RNA large subunit methyltransferase H (156 aa).

Residues Leu73, Gly104, and 123 to 128 each bind S-adenosyl-L-methionine; that span reads VSSLTL.

The protein belongs to the RNA methyltransferase RlmH family. As to quaternary structure, homodimer.

It is found in the cytoplasm. It catalyses the reaction pseudouridine(1915) in 23S rRNA + S-adenosyl-L-methionine = N(3)-methylpseudouridine(1915) in 23S rRNA + S-adenosyl-L-homocysteine + H(+). Its function is as follows. Specifically methylates the pseudouridine at position 1915 (m3Psi1915) in 23S rRNA. In Paraburkholderia phytofirmans (strain DSM 17436 / LMG 22146 / PsJN) (Burkholderia phytofirmans), this protein is Ribosomal RNA large subunit methyltransferase H.